A 510-amino-acid polypeptide reads, in one-letter code: MDEKLPESVDVVVLGTGLPEAILASACARAGLSVLHLDRNEYYGGDWSSFTMSMVHEVTENQVKKLDSSEISKLSELLTENEQLIELGNREIVENIEMTWIPRGKDEEKPMKTQLEEASQMRRFSIDLVPKILLSKGAMVQTLCDSQVSHYAEFKLVNRQLCPTETPEAGITLNPVPCSKGEIFQSNALSILEKRALMKFITFCTQWSTKDTEEGRKLLAEHADRPFSEFLEQMGVGKTLQSFIINTIGILQQRPTAMTGMLASCQFMDSVGHFGPSPFLFPLYGCGELSQCFCRLAAVFGSLYCLGRPVQAIVKKDGKITAVIANGDRVNCRYIVMSPRFVPETVPASSTLKIERIVYATDKSIKEAEKEQLTLLNLASLRPDAAVSRLVEVGFEACTAPKGHFLVHATGTQEGETSVKTIAEKIFEKNEVEPYWKMSFTANSMKFDTAGAENVVVAPPVDANLHYASVVEECRQLFCTTWPELDFLPRAMKKEEEEEEEPETEEIAEN.

This sequence belongs to the Rab GDI family. As to quaternary structure, may interact with rab-5, rab-7 and rab-11. Does not interact with rab-3, rab-27 and rab-10. Expressed in several neurons including head neurons, motor neurons located in the ventral nerve cord, HSN and CAN neurons, and tail neurons, and in muscles such as body-wall, pharyngeal, intestinal and anal sphincter. Also expressed in seam cells, the hypodermis and the intestine.

It is found in the cytoplasm. Its function is as follows. Substrate-binding subunit of the Rab geranylgeranyltransferase (GGTase) complex. Binds unprenylated Rab proteins and presents the substrate peptide to the catalytic component B and remains bound to it after the geranylgeranyl transfer reaction. The component A is thought to be regenerated by transferring its prenylated Rab back to the donor membrane. Plays a role in neurotransmitter release from presynaptic terminals at neuromuscular junctions. Positively regulates the function of rab-27 in synaptic transmission most likely through mediating rab-27 prenylation. This is Rab proteins geranylgeranyltransferase component A 1 from Caenorhabditis elegans.